Consider the following 103-residue polypeptide: SOSS complex subunit C (103 aa).

This sequence belongs to the SOSS-C family. Belongs to the multiprotein complex Integrator. Component of the SOSS complex, composed of soss-b (soss-b1/nabp2 or soss-b2/nabp1), soss-a/ints3 and soss-c/inip.

It localises to the nucleus. Functionally, component of the SOSS complex, a multiprotein complex that functions downstream of the MRN complex to promote DNA repair and G2/M checkpoint. The SOSS complex associates with single-stranded DNA at DNA lesions and influences diverse endpoints in the cellular DNA damage response including cell-cycle checkpoint activation, recombinational repair and maintenance of genomic stability. Required for efficient homologous recombination-dependent repair of double-strand breaks (DSBs). This Danio rerio (Zebrafish) protein is SOSS complex subunit C (inip).